A 661-amino-acid chain; its full sequence is Fusaric acid cluster transcription factor FUB12 (661 aa).

Residues 17–48 (CVPCRTRKIKCNAAVVGLPCGSCVSRECPDEC) constitute a DNA-binding region (zn(2)-C6 fungal-type). Disordered regions lie at residues 56–132 (RTVK…PPGQ) and 151–184 (SAAQ…PQLD). Polar residues predominate over residues 73–98 (PDTNGSVLSPRQQQLPTNVSRQATDS). Residues 99 to 109 (SHSDPVEESIH) show a composition bias toward basic and acidic residues. Polar residues predominate over residues 110 to 119 (ASHTGSSLRN). Over residues 120–129 (DTPHSRDRRP) the composition is skewed to basic and acidic residues.

The protein localises to the nucleus. Its function is as follows. Transcription factor that is involved in the formation of the two Fusaric acid derivatives, dehydrofusaric acid and fusarinolic acid, serving as a detoxification mechanism. The sequence is that of Fusaric acid cluster transcription factor FUB12 from Gibberella moniliformis (strain M3125 / FGSC 7600) (Maize ear and stalk rot fungus).